The chain runs to 131 residues: Small ribosomal subunit protein bS6 (131 aa).

Residues 98–131 (EASPMVKAKDERRERRDDFANETADDSDAGDSEE) are disordered. Residues 104–116 (KAKDERRERRDDF) are compositionally biased toward basic and acidic residues. The segment covering 120-131 (TADDSDAGDSEE) has biased composition (acidic residues).

This sequence belongs to the bacterial ribosomal protein bS6 family.

In terms of biological role, binds together with bS18 to 16S ribosomal RNA. This Enterobacter sp. (strain 638) protein is Small ribosomal subunit protein bS6.